The primary structure comprises 425 residues: Type I restriction enzyme MjaVII specificity subunit (425 aa).

The target recognition domain 1 stretch occupies residues lysine 9–leucine 168. Positions glutamate 169–threonine 208 are central conserved region (CCR). Positions glutamate 169 to threonine 208 form a coiled coil. Residues lysine 209–leucine 368 form a target recognition domain 2 region. A coiled-coil region spans residues glutamate 369–threonine 418. Positions glutamate 369–threonine 418 are distal conserved region (DCR).

The protein belongs to the type-I restriction system S methylase family. As to quaternary structure, the type I restriction/modification system is composed of three polypeptides R, M and S.

The specificity (S) subunit of a type I restriction enzyme; this subunit dictates DNA sequence specificity. The M and S subunits together form a methyltransferase (MTase) that methylates A-3 on the top and bottom strands of the sequence 5'-CAAN(7)TGG-3'. In the presence of the R subunit the complex can also act as an endonuclease, binding to the same target sequence but cutting the DNA some distance from this site. Whether the DNA is cut or modified depends on the methylation state of the target sequence. When the target site is unmodified, the DNA is cut. When the target site is hemimethylated, the complex acts as a maintenance MTase modifying the DNA so that both strands become methylated. After locating a non-methylated recognition site, the enzyme complex serves as a molecular motor that translocates DNA in an ATP-dependent manner until a collision occurs that triggers cleavage. The protein is Type I restriction enzyme MjaVII specificity subunit of Methanocaldococcus jannaschii (strain ATCC 43067 / DSM 2661 / JAL-1 / JCM 10045 / NBRC 100440) (Methanococcus jannaschii).